A 37-amino-acid polypeptide reads, in one-letter code: Large ribosomal subunit protein bL36c (37 aa).

The protein belongs to the bacterial ribosomal protein bL36 family.

It localises to the plastid. The chain is Large ribosomal subunit protein bL36c from Helicosporidium sp. subsp. Simulium jonesii (Green alga).